Here is a 727-residue protein sequence, read N- to C-terminus: Capsid protein VP1 (727 aa).

The span at 1–10 shows a compositional bias: basic residues; that stretch reads MAPPAKRARR. Disordered regions lie at residues 1 to 38 and 95 to 184; these read MAPP…SDAA and VLTD…VGIS. The Nuclear localization signal signature appears at 4–13; the sequence is PAKRARRGLV. The interval 19-64 is phospholipase A2-like; that stretch reads YLGPGNSLDQGEPTNPSDAAAKEHDEAYAAYLRSGKNPYLYFSPAD. A compositionally biased stretch (polar residues) spans 25–35; the sequence is SLDQGEPTNPS. The segment covering 166–183 has biased composition (gly residues); the sequence is SGNGSGGGGGGGSGGVGI. A Mg(2+)-binding site is contributed by Asn323. A disordered region spans residues 507–536; the sequence is AQTDENQAADGDPRYAFGRQHGQKTTTTGE. A disulfide bridge links Cys633 with Cys637.

This sequence belongs to the parvoviridae capsid protein family. In terms of assembly, interacts with host TFRC.

The protein resides in the virion. Its subcellular location is the host nucleus. Capsid protein self-assembles to form an icosahedral capsid with a T=1 symmetry, about 22 nm in diameter, and consisting of 60 copies of two size variants of the capsid proteins, VP1 and VP2, which differ by the presence of an N-terminal extension in the minor protein VP1. The capsid encapsulates the genomic ssDNA. Capsid proteins are responsible for the attachment to host cell receptor TFRC. This attachment induces virion internalization predominantly through clathrin-dependent endocytosis. Binding to the host receptors also induces capsid rearrangements leading to surface exposure of VP1 N-terminus. This is Capsid protein VP1 from Feline panleukopenia virus (FPV).